A 102-amino-acid chain; its full sequence is MLSRLQELRKEEETLLRLKAALHDQLNRLKVEELALQSMINSRGRTETLSSQPAPEQLCDMSLHVDNEVTINQTTLKLSTRSPMEEEEEEEEEEEEEEESDS.

The segment covering 73 to 82 has biased composition (polar residues); sequence QTTLKLSTRS. The tract at residues 73-102 is disordered; that stretch reads QTTLKLSTRSPMEEEEEEEEEEEEEEESDS. A compositionally biased stretch (acidic residues) spans 85–102; the sequence is EEEEEEEEEEEEEEESDS.

As to quaternary structure, part of the SNAPc complex composed of 5 subunits: SNAPC1, SNAPC2, SNAPC3, SNAPC4 and SNAPC5. SNAPC5 interacts with SNAPC4.

It localises to the nucleus. Part of the SNAPc complex required for the transcription of both RNA polymerase II and III small-nuclear RNA genes. Binds to the proximal sequence element (PSE), a non-TATA-box basal promoter element common to these 2 types of genes. Recruits TBP and BRF2 to the U6 snRNA TATA box. The sequence is that of snRNA-activating protein complex subunit 5 from Mus musculus (Mouse).